The primary structure comprises 400 residues: Formate-dependent phosphoribosylglycinamide formyltransferase (400 aa).

Residues 21-22 (EL) and Glu-81 contribute to the N(1)-(5-phospho-beta-D-ribosyl)glycinamide site. ATP contacts are provided by residues Arg-114, Lys-155, 160–165 (SSGKGQ), 195–198 (EGRI), and Glu-203. Residues 119–313 (RLAAEKLGLP…EFELHVRAIL (195 aa)) form the ATP-grasp domain. Mg(2+) is bound by residues Glu-272 and Glu-284. Residues Asp-291, Lys-360, and 367–368 (RR) contribute to the N(1)-(5-phospho-beta-D-ribosyl)glycinamide site.

This sequence belongs to the PurK/PurT family. Homodimer.

The catalysed reaction is N(1)-(5-phospho-beta-D-ribosyl)glycinamide + formate + ATP = N(2)-formyl-N(1)-(5-phospho-beta-D-ribosyl)glycinamide + ADP + phosphate + H(+). It participates in purine metabolism; IMP biosynthesis via de novo pathway; N(2)-formyl-N(1)-(5-phospho-D-ribosyl)glycinamide from N(1)-(5-phospho-D-ribosyl)glycinamide (formate route): step 1/1. In terms of biological role, involved in the de novo purine biosynthesis. Catalyzes the transfer of formate to 5-phospho-ribosyl-glycinamide (GAR), producing 5-phospho-ribosyl-N-formylglycinamide (FGAR). Formate is provided by PurU via hydrolysis of 10-formyl-tetrahydrofolate. This is Formate-dependent phosphoribosylglycinamide formyltransferase from Methylococcus capsulatus (strain ATCC 33009 / NCIMB 11132 / Bath).